Consider the following 102-residue polypeptide: Small ribosomal subunit protein uS10 (102 aa).

The protein belongs to the universal ribosomal protein uS10 family. In terms of assembly, part of the 30S ribosomal subunit.

Involved in the binding of tRNA to the ribosomes. This is Small ribosomal subunit protein uS10 from Methanosphaerula palustris (strain ATCC BAA-1556 / DSM 19958 / E1-9c).